Reading from the N-terminus, the 594-residue chain is 4-alpha-glucanotransferase DPE1, chloroplastic/amyloplastic (594 aa).

Residues 1 to 37 (MATLSLPLPHLTQAIPARARPRPRPLRGIPARLLSCR) constitute a chloroplast transit peptide.

The protein belongs to the disproportionating enzyme family.

The protein resides in the plastid. Its subcellular location is the chloroplast. It is found in the amyloplast. It carries out the reaction Transfers a segment of a (1-&gt;4)-alpha-D-glucan to a new position in an acceptor, which may be glucose or a (1-&gt;4)-alpha-D-glucan.. Its function is as follows. Chloroplastic alpha-glucanotransferase involved in maltotriose metabolism. The sequence is that of 4-alpha-glucanotransferase DPE1, chloroplastic/amyloplastic (DPE1) from Oryza sativa subsp. japonica (Rice).